The sequence spans 138 residues: Aspartate 1-decarboxylase (138 aa).

S25 (schiff-base intermediate with substrate; via pyruvic acid) is an active-site residue. At S25 the chain carries Pyruvic acid (Ser). T57 is a substrate binding site. Y58 serves as the catalytic Proton donor. 73–75 (GAA) contributes to the substrate binding site.

Belongs to the PanD family. Heterooctamer of four alpha and four beta subunits. The cofactor is pyruvate. Is synthesized initially as an inactive proenzyme, which is activated by self-cleavage at a specific serine bond to produce a beta-subunit with a hydroxyl group at its C-terminus and an alpha-subunit with a pyruvoyl group at its N-terminus.

The protein localises to the cytoplasm. It catalyses the reaction L-aspartate + H(+) = beta-alanine + CO2. Its pathway is cofactor biosynthesis; (R)-pantothenate biosynthesis; beta-alanine from L-aspartate: step 1/1. Functionally, catalyzes the pyruvoyl-dependent decarboxylation of aspartate to produce beta-alanine. This Renibacterium salmoninarum (strain ATCC 33209 / DSM 20767 / JCM 11484 / NBRC 15589 / NCIMB 2235) protein is Aspartate 1-decarboxylase.